The sequence spans 274 residues: Large ribosomal subunit protein uL2 (274 aa).

Disordered stretches follow at residues 28–54 (APHAPLLEKKSKSGGRNNNGRITTRHI) and 224–274 (VAMN…RRRK). A compositionally biased stretch (basic and acidic residues) spans 263-274 (KRTDKMIVRRRK).

The protein belongs to the universal ribosomal protein uL2 family. In terms of assembly, part of the 50S ribosomal subunit. Forms a bridge to the 30S subunit in the 70S ribosome.

In terms of biological role, one of the primary rRNA binding proteins. Required for association of the 30S and 50S subunits to form the 70S ribosome, for tRNA binding and peptide bond formation. It has been suggested to have peptidyltransferase activity; this is somewhat controversial. Makes several contacts with the 16S rRNA in the 70S ribosome. This chain is Large ribosomal subunit protein uL2, found in Pseudomonas savastanoi pv. phaseolicola (strain 1448A / Race 6) (Pseudomonas syringae pv. phaseolicola (strain 1448A / Race 6)).